Here is a 178-residue protein sequence, read N- to C-terminus: Large ribosomal subunit protein uL6 (178 aa).

Belongs to the universal ribosomal protein uL6 family. Part of the 50S ribosomal subunit.

Functionally, this protein binds to the 23S rRNA, and is important in its secondary structure. It is located near the subunit interface in the base of the L7/L12 stalk, and near the tRNA binding site of the peptidyltransferase center. In Thermoplasma acidophilum (strain ATCC 25905 / DSM 1728 / JCM 9062 / NBRC 15155 / AMRC-C165), this protein is Large ribosomal subunit protein uL6.